A 607-amino-acid chain; its full sequence is Siderochrome iron transporter 2 (607 aa).

Residues 1 to 46 form a disordered region; sequence MGLFGSFGARNKATPQVPPGAVAKAPEGTPKGPETNDQPDMDSSRL. 13 helical membrane-spanning segments follow: residues 86–106, 129–149, 152–172, 180–200, 210–230, 242–262, 297–317, 326–346, 367–387, 404–424, 432–452, 459–479, and 499–519; these read VWAT…QSGI, ILSS…LNLW, AEGF…LAAC, AGYV…DVFV, AFTF…APLA, WAYG…AVVF, IIGA…FSLA, SAAF…FAAW, LGAC…DLYF, YMTQ…GLWV, HTCL…MIHF, IGYV…LVIG, and FIGL…AAIY. An N-linked (GlcNAc...) asparagine glycan is attached at Asn538. The helical transmembrane segment at 573-593 threads the bilayer; the sequence is FGAVAATCILILGIPAIAVWK.

Belongs to the major facilitator superfamily.

It is found in the cell membrane. In terms of biological role, major facilitator transporter involved in ferrichrome (FC) uptake. The sequence is that of Siderochrome iron transporter 2 from Aspergillus fumigatus (strain ATCC MYA-4609 / CBS 101355 / FGSC A1100 / Af293) (Neosartorya fumigata).